A 580-amino-acid polypeptide reads, in one-letter code: Zinc finger CCCH domain-containing protein 47 (580 aa).

ANK repeat units follow at residues E72 to R102 and E107 to S139. 2 consecutive C3H1-type zinc fingers follow at residues P251–F278 and Q286–E310. Positions Y421–H451 are disordered.

Expressed in roots and anthers.

The protein resides in the nucleus. Functionally, involved in salt stress response. May positively modulate plant tolerance to salt stress. The polypeptide is Zinc finger CCCH domain-containing protein 47 (Arabidopsis thaliana (Mouse-ear cress)).